A 417-amino-acid chain; its full sequence is UDP-N-acetylglucosamine 1-carboxyvinyltransferase (417 aa).

Phosphoenolpyruvate is bound at residue 22 to 23 (KN). R91 is a UDP-N-acetyl-alpha-D-glucosamine binding site. C115 acts as the Proton donor in catalysis. C115 is subject to 2-(S-cysteinyl)pyruvic acid O-phosphothioketal. UDP-N-acetyl-alpha-D-glucosamine contacts are provided by residues 120 to 124 (RPVDL), D304, and I326.

The protein belongs to the EPSP synthase family. MurA subfamily.

It localises to the cytoplasm. The enzyme catalyses phosphoenolpyruvate + UDP-N-acetyl-alpha-D-glucosamine = UDP-N-acetyl-3-O-(1-carboxyvinyl)-alpha-D-glucosamine + phosphate. The protein operates within cell wall biogenesis; peptidoglycan biosynthesis. In terms of biological role, cell wall formation. Adds enolpyruvyl to UDP-N-acetylglucosamine. The protein is UDP-N-acetylglucosamine 1-carboxyvinyltransferase of Nitratidesulfovibrio vulgaris (strain DP4) (Desulfovibrio vulgaris).